The primary structure comprises 367 residues: Inhibin alpha chain (367 aa).

Residues 1–20 (MVPPLPLLLLLLLVPQGGHG) form the signal peptide. A propeptide spanning residues 21-63 (CQGSELDREIVLAKVRALFLDALGPPAVTGEGGDPGVRRLPRR) is cleaved from the precursor. Residues 64 to 233 (HALGGFARRG…PPSGGERTRR (170 aa)) constitute a propeptide, inhibin alpha N-terminal region. N-linked (GlcNAc...) asparagine glycosylation is found at Asn-147 and Asn-269. 3 disulfide bridges follow: Cys-263–Cys-329, Cys-292–Cys-364, and Cys-296–Cys-366.

Belongs to the TGF-beta family. As to quaternary structure, dimeric, linked by one or more disulfide bonds. Activin B is a dimer of alpha and beta-B. Inhibin A is a dimer of alpha and beta-A. Inhibin B is a dimer of alpha and beta-B. Interacts with TGFBR3L; this interaction regulates female fertility. Post-translationally, proteolytic processing yields a number of bioactive forms, consisting either solely of the mature alpha chain, of the most N-terminal propeptide linked through a disulfide bond to the mature alpha chain, or of the entire proprotein.

The protein localises to the secreted. In terms of biological role, inhibins and activins inhibit and activate, respectively, the secretion of follitropin by the pituitary gland. Inhibins/activins are involved in regulating a number of diverse functions such as hypothalamic and pituitary hormone secretion, gonadal hormone secretion, germ cell development and maturation, erythroid differentiation, insulin secretion, nerve cell survival, embryonic axial development or bone growth, depending on their subunit composition. Inhibins appear to oppose the functions of activins. Inhibin A is a dimer of alpha/INHA and beta-A/INHBA that functions as a feedback regulator in the hypothalamic-pituitary-gonadal (HPG) axis. Inhibits the secretion of FSH from the anterior pituitary gland by acting on pituitary gonadotrope cells. Antagonizes activin A by binding to the proteoglycan, betaglycan, and forming a stable complex with and, thereby, sequestering type II activin receptors while excluding type I receptor. Its function is as follows. Inhibin B is a dimer of alpha and beta-B that plays a crucial role in the regulation of the reproductive system by inhibiting the secretion of follicle-stimulating hormone (FSH) from the anterior pituitary gland. Thereby, maintains reproductive homeostasis in both males and females. Acts as a more potent suppressor of FSH release than inhibin A. Functions as competitive receptor antagonist binding activin type II receptors with high affinity in the presence of the TGF-beta type III coreceptor/TGFBR3L. This is Inhibin alpha chain (INHA) from Equus caballus (Horse).